The following is a 134-amino-acid chain: Phosphoribosyl-AMP cyclohydrolase (134 aa).

Residue D80 participates in Mg(2+) binding. C81 is a Zn(2+) binding site. Mg(2+) is bound by residues D82 and D84. Residues C98 and C105 each contribute to the Zn(2+) site.

This sequence belongs to the PRA-CH family. Homodimer. Mg(2+) serves as cofactor. The cofactor is Zn(2+).

The protein resides in the cytoplasm. It catalyses the reaction 1-(5-phospho-beta-D-ribosyl)-5'-AMP + H2O = 1-(5-phospho-beta-D-ribosyl)-5-[(5-phospho-beta-D-ribosylamino)methylideneamino]imidazole-4-carboxamide. It functions in the pathway amino-acid biosynthesis; L-histidine biosynthesis; L-histidine from 5-phospho-alpha-D-ribose 1-diphosphate: step 3/9. Its function is as follows. Catalyzes the hydrolysis of the adenine ring of phosphoribosyl-AMP. In Bordetella pertussis (strain Tohama I / ATCC BAA-589 / NCTC 13251), this protein is Phosphoribosyl-AMP cyclohydrolase.